Here is a 322-residue protein sequence, read N- to C-terminus: Chemokine XC receptor 1 (322 aa).

The Extracellular segment spans residues 1-27 (MESSTAFYDYHDKLSLLCENNVIFFST). Residues 28-55 (ISTIVLYSLVFLLSLVGNSLVLWVLVKY) form a helical membrane-spanning segment. At 56-65 (ENLESLTNIF) the chain is on the cytoplasmic side. Residues 66 to 85 (ILNLCLSDLMFSCLLPVLIS) form a helical membrane-spanning segment. The Extracellular portion of the chain corresponds to 86–98 (AQWSWFLGDFFCK). A disulfide bridge connects residues Cys97 and Cys170. Residues 99–120 (FFNMIFGISLYSSIFFLTIMTI) form a helical membrane-spanning segment. Topologically, residues 121 to 137 (HRYLSVVSPISTLGIHT) are cytoplasmic. The chain crosses the membrane as a helical span at residues 138–162 (LRCRVLVTSCVWAASILFSIPDAVF). At 163–185 (HKVISLNCKYSEHHGFLASVYQH) the chain is on the extracellular side. Residues 186 to 204 (NIFFLLSMGIILFCYVQIL) form a helical membrane-spanning segment. Over 205–220 (RTLFRTRSRQRHRTVR) the chain is Cytoplasmic. The helical transmembrane segment at 221–243 (LIFTVVVAYFLSWAPYNLTLFLK) threads the bilayer. The Extracellular segment spans residues 244–259 (TGIIQQSCESLQQLDI). A helical membrane pass occupies residues 260-283 (AMIICRHLAFSHCCFNPVLYVFVG). The Cytoplasmic portion of the chain corresponds to 284 to 322 (IKFRRHLKHLFQQVWLCRKTSSTVPCSPGTFTYEGPSFY).

This sequence belongs to the G-protein coupled receptor 1 family. Expressed by dendritic cells from the thymus, slpeen, subcutaneous lymph nodes and mesenteric lymph nodes.

The protein localises to the cell membrane. Receptor for chemokines SCYC1 and SCYC2. Subsequently transduces a signal by increasing the intracellular calcium ions level. Receptor for XCL1/Lymphotactin. This chain is Chemokine XC receptor 1 (Xcr1), found in Mus musculus (Mouse).